The following is a 461-amino-acid chain: UDP-N-acetylmuramoylalanine--D-glutamate ligase (461 aa).

Residue 115-121 (GSNGKTT) coordinates ATP.

The protein belongs to the MurCDEF family.

It is found in the cytoplasm. The catalysed reaction is UDP-N-acetyl-alpha-D-muramoyl-L-alanine + D-glutamate + ATP = UDP-N-acetyl-alpha-D-muramoyl-L-alanyl-D-glutamate + ADP + phosphate + H(+). Its pathway is cell wall biogenesis; peptidoglycan biosynthesis. Cell wall formation. Catalyzes the addition of glutamate to the nucleotide precursor UDP-N-acetylmuramoyl-L-alanine (UMA). The sequence is that of UDP-N-acetylmuramoylalanine--D-glutamate ligase from Acidobacterium capsulatum (strain ATCC 51196 / DSM 11244 / BCRC 80197 / JCM 7670 / NBRC 15755 / NCIMB 13165 / 161).